Consider the following 311-residue polypeptide: D-alanine--D-alanine ligase (311 aa).

The 202-residue stretch at K105–E306 folds into the ATP-grasp domain. An ATP-binding site is contributed by A133–T188. Mg(2+) contacts are provided by D261, E273, and N275.

The protein belongs to the D-alanine--D-alanine ligase family. Mg(2+) serves as cofactor. It depends on Mn(2+) as a cofactor.

Its subcellular location is the cytoplasm. The enzyme catalyses 2 D-alanine + ATP = D-alanyl-D-alanine + ADP + phosphate + H(+). Its pathway is cell wall biogenesis; peptidoglycan biosynthesis. Functionally, cell wall formation. This is D-alanine--D-alanine ligase from Syntrophobacter fumaroxidans (strain DSM 10017 / MPOB).